We begin with the raw amino-acid sequence, 562 residues long: Formate--tetrahydrofolate ligase (562 aa).

Thr71–Ser78 is a binding site for ATP.

The protein belongs to the formate--tetrahydrofolate ligase family.

The catalysed reaction is (6S)-5,6,7,8-tetrahydrofolate + formate + ATP = (6R)-10-formyltetrahydrofolate + ADP + phosphate. It participates in one-carbon metabolism; tetrahydrofolate interconversion. The polypeptide is Formate--tetrahydrofolate ligase (Bacillus anthracis (strain A0248)).